Reading from the N-terminus, the 1117-residue chain is Zinc finger E-box-binding homeobox 1 (1117 aa).

Disordered stretches follow at residues 1 to 103 (MADG…QNHD) and 122 to 143 (APEE…NGTP). Positions 15 to 30 (PRRNNVTNYNTVVEAN) are enriched in low complexity. Residues Ser31 and Ser33 each carry the phosphoserine modification. Residues 150–173 (LTCPYCDRGYKRFTSLKEHIKYRH) form a C2H2-type 1 zinc finger. Glycyl lysine isopeptide (Lys-Gly) (interchain with G-Cter in SUMO2) cross-links involve residues Lys166 and Lys175. 2 C2H2-type zinc fingers span residues 180-202 (FSCS…MTSH) and 220-242 (FKCT…LRIH). A C2H2-type 4; atypical zinc finger spans residues 248–272 (YECPNCKKRFSHSGSYSSHISSKKC). A disordered region spans residues 278–307 (VNGRPRSGLKTSQCSSPSLSTSPGSPTRPQ). A Glycyl lysine isopeptide (Lys-Gly) (interchain with G-Cter in SUMO2) cross-link involves residue Lys287. The segment covering 288–304 (TSQCSSPSLSTSPGSPT) has biased composition (low complexity). A phosphoserine mark is found at Ser293 and Ser302. Residues Lys311 and Lys315 each participate in a glycyl lysine isopeptide (Lys-Gly) (interchain with G-Cter in SUMO2) cross-link. Lys327 participates in a covalent cross-link: Glycyl lysine isopeptide (Lys-Gly) (interchain with G-Cter in SUMO); alternate. Lys327 is covalently cross-linked (Glycyl lysine isopeptide (Lys-Gly) (interchain with G-Cter in SUMO2); alternate). Glycyl lysine isopeptide (Lys-Gly) (interchain with G-Cter in SUMO2) cross-links involve residues Lys419, Lys473, Lys484, Lys495, and Lys528. Disordered regions lie at residues 476–501 (IPAP…TDKS), 528–566 (KHYD…SQPP), and 613–687 (GQIP…SPLN). A compositionally biased stretch (basic and acidic residues) spans 484–501 (KSEKLPEDLTVKSETDKS). Residues 559–618 (DLSPSQPPLKNLLSLLKAYYALNAQPSTEELSKIADSVNLPLDGVKKWFEKMQAGQIPGQ) constitute a DNA-binding region (homeobox; atypical). 4 positions are modified to phosphoserine: Ser657, Ser664, Ser671, and Ser678. Residues 673–687 (MNGSRSCTSSPSPLN) are compositionally biased toward polar residues. Thr680 carries the phosphothreonine modification. Residue Ser682 is modified to Phosphoserine. Residue Lys752 forms a Glycyl lysine isopeptide (Lys-Gly) (interchain with G-Cter in SUMO); alternate linkage. Lys752 participates in a covalent cross-link: Glycyl lysine isopeptide (Lys-Gly) (interchain with G-Cter in SUMO2); alternate. The segment at 834–876 (PPVKVIQPNGNQDERQDTSSEGVSTVEDQNDSDSTPPKKKTRK) is disordered. A compositionally biased stretch (polar residues) spans 852–868 (SSEGVSTVEDQNDSDST). 2 C2H2-type zinc fingers span residues 882–904 (YACD…KYEH) and 910–932 (HECG…MRLH). The segment at 938 to 959 (YQCDKCGKRFSHSGSYSQHMNH) adopts a C2H2-type 7; atypical zinc-finger fold. A disordered region spans residues 991 to 1117 (EHVGARASPS…QLSEEKTNEA (127 aa)). Acidic residues-rich tracts occupy residues 1013–1032 (EEDE…MEEL), 1042–1069 (QGEE…DEAE), and 1098–1109 (SEMESESESEQL).

The protein belongs to the delta-EF1/ZFH-1 C2H2-type zinc-finger family. In terms of assembly, interacts (via N-terminus) with SMARCA4/BRG1. Ubiquitinated, leading to degradation in a proteasome-dependent manner. Deubiquitinated by USP51, leading to stabilization. Expressed in the external germinal layer (EGL) and internal granular layer (IGL) of the cerebellum (at protein level).

It localises to the nucleus. Acts as a transcriptional repressor. Binds to E-box sequences in the immunoglobulin heavy chain enhancer as well as in the regulatory regions of many other tissue-specific genes. Represses E-cadherin promoter and induces an epithelial-mesenchymal transition (EMT) by recruiting SMARCA4/BRG1. Represses BCL6 transcription in the presence of the corepressor CTBP1. Positively regulates neuronal differentiation. Represses RCOR1 transcription activation during neurogenesis. Represses transcription by binding to the E box (5'-CANNTG-3'). In the absence of TGFB1, acts as a repressor of COL1A2 transcription via binding to the E-box in the upstream enhancer region. Promotes tumorigenicity by repressing stemness-inhibiting microRNAs. The chain is Zinc finger E-box-binding homeobox 1 from Mus musculus (Mouse).